The following is a 303-amino-acid chain: Probable 5-dehydro-4-deoxyglucarate dehydratase (303 aa).

Belongs to the DapA family.

It carries out the reaction 5-dehydro-4-deoxy-D-glucarate + H(+) = 2,5-dioxopentanoate + CO2 + H2O. It functions in the pathway carbohydrate acid metabolism; D-glucarate degradation; 2,5-dioxopentanoate from D-glucarate: step 2/2. The sequence is that of Probable 5-dehydro-4-deoxyglucarate dehydratase from Acinetobacter baumannii (strain ATCC 17978 / DSM 105126 / CIP 53.77 / LMG 1025 / NCDC KC755 / 5377).